Reading from the N-terminus, the 200-residue chain is Holliday junction branch migration complex subunit RuvA (200 aa).

The tract at residues 1–64 is domain I; sequence MFAYFKGSLV…EDALQLYGFF (64 aa). A domain II region spans residues 65–143; it reads KEEERQLFRL…KLPLVTPAAG (79 aa). A flexible linker region spans residues 143–147; sequence GKAAM. Positions 148–200 are domain III; that stretch reads PSHHVKDDAVHALVTLGFSRLLAQKAVSALLEEKPEQSVEEVIKYALATIHNS.

Belongs to the RuvA family. As to quaternary structure, homotetramer. Forms an RuvA(8)-RuvB(12)-Holliday junction (HJ) complex. HJ DNA is sandwiched between 2 RuvA tetramers; dsDNA enters through RuvA and exits via RuvB. An RuvB hexamer assembles on each DNA strand where it exits the tetramer. Each RuvB hexamer is contacted by two RuvA subunits (via domain III) on 2 adjacent RuvB subunits; this complex drives branch migration. In the full resolvosome a probable DNA-RuvA(4)-RuvB(12)-RuvC(2) complex forms which resolves the HJ.

It localises to the cytoplasm. The RuvA-RuvB-RuvC complex processes Holliday junction (HJ) DNA during genetic recombination and DNA repair, while the RuvA-RuvB complex plays an important role in the rescue of blocked DNA replication forks via replication fork reversal (RFR). RuvA specifically binds to HJ cruciform DNA, conferring on it an open structure. The RuvB hexamer acts as an ATP-dependent pump, pulling dsDNA into and through the RuvAB complex. HJ branch migration allows RuvC to scan DNA until it finds its consensus sequence, where it cleaves and resolves the cruciform DNA. The chain is Holliday junction branch migration complex subunit RuvA from Chlorobium phaeobacteroides (strain DSM 266 / SMG 266 / 2430).